Consider the following 621-residue polypeptide: uncharacterized protein (621 aa).

Disordered regions lie at residues 92 to 134 and 268 to 310; these read FRNS…QINQ and KINH…DDEI. A compositionally biased stretch (low complexity) spans 94 to 134; the sequence is NSSNQSSQSNQVNQSNQSSPSSQISPSSQVNKFNQSSQINQ. The span at 296–310 shows a compositional bias: acidic residues; it reads TNDETNDETDNDDEI. A coiled-coil region spans residues 354 to 401; the sequence is ANKIQNKIIQIVETLNAYKNKQSQIAIEAKNKIKHITVSNKEVSENIE.

This is an uncharacterized protein from Acanthamoeba polyphaga mimivirus (APMV).